A 141-amino-acid polypeptide reads, in one-letter code: Hemoglobin subunit alpha (141 aa).

In terms of domain architecture, Globin spans 1-141; the sequence is VLSPADKTNV…VSTVLTSKYR (141 aa). Serine 3 carries the post-translational modification Phosphoserine. Lysine 7 carries the post-translational modification N6-succinyllysine. A Phosphothreonine modification is found at threonine 8. N6-succinyllysine is present on lysine 11. An N6-acetyllysine; alternate modification is found at lysine 16. Lysine 16 is subject to N6-succinyllysine; alternate. Tyrosine 24 is modified (phosphotyrosine). Serine 35 bears the Phosphoserine mark. Lysine 40 is subject to N6-succinyllysine. A Phosphoserine modification is found at serine 49. Histidine 58 contributes to the O2 binding site. Residue histidine 87 participates in heme b binding. Residue serine 102 is modified to Phosphoserine. The residue at position 108 (threonine 108) is a Phosphothreonine. A phosphoserine mark is found at serine 124 and serine 131. Residues threonine 134 and threonine 137 each carry the phosphothreonine modification. Serine 138 bears the Phosphoserine mark.

Belongs to the globin family. In terms of assembly, heterotetramer of two alpha chains and two beta chains. Red blood cells.

In terms of biological role, involved in oxygen transport from the lung to the various peripheral tissues. This chain is Hemoglobin subunit alpha, found in Otospermophilus beecheyi (California ground squirrel).